A 338-amino-acid polypeptide reads, in one-letter code: Probable beta-1,4-xylosyltransferase IRX9 (338 aa).

Positions 1–21 (MASAGGCKKKTGNSRSRSPRS) are disordered. Residues 1–27 (MASAGGCKKKTGNSRSRSPRSPVVLRR) lie on the Cytoplasmic side of the membrane. A helical; Signal-anchor for type II membrane protein membrane pass occupies residues 28–46 (AMLHSSLCFLVGLLAGLAA). Residues 47 to 338 (PSDWPAAAGA…IMLWRIQTTL (292 aa)) lie on the Lumenal side of the membrane. N-linked (GlcNAc...) asparagine glycans are attached at residues N232 and N314.

Belongs to the glycosyltransferase 43 family.

Its subcellular location is the golgi apparatus membrane. Its function is as follows. Probable beta-1,4-xylosyltransferase involved in xylan biosynthesis in cell walls. The sequence is that of Probable beta-1,4-xylosyltransferase IRX9 from Oryza sativa subsp. japonica (Rice).